Consider the following 157-residue polypeptide: Small ribosomal subunit protein uS7 (157 aa).

This sequence belongs to the universal ribosomal protein uS7 family. As to quaternary structure, part of the 30S ribosomal subunit. Contacts proteins S9 and S11.

Its function is as follows. One of the primary rRNA binding proteins, it binds directly to 16S rRNA where it nucleates assembly of the head domain of the 30S subunit. Is located at the subunit interface close to the decoding center, probably blocks exit of the E-site tRNA. In Paracidovorax citrulli (strain AAC00-1) (Acidovorax citrulli), this protein is Small ribosomal subunit protein uS7.